Here is a 765-residue protein sequence, read N- to C-terminus: Amine oxidase [copper-containing] 3 (765 aa).

The Cytoplasmic segment spans residues 1-6; sequence MTQKTT. A helical; Signal-anchor for type II membrane protein transmembrane segment spans residues 7-27; the sequence is LVLLALAVITIFALVCVLLAG. Topologically, residues 28–765 are extracellular; that stretch reads RSGDGGGLSQ…SHGGFAYRDN (738 aa). Residue asparagine 137 is glycosylated (N-linked (GlcNAc...) asparagine). An intrachain disulfide couples cysteine 198 to cysteine 199. Asparagine 232 and asparagine 294 each carry an N-linked (GlcNAc...) asparagine glycan. Aspartate 386 functions as the Proton acceptor in the catalytic mechanism. A disulfide bridge connects residues cysteine 404 and cysteine 430. Tyrosine 471 (schiff-base intermediate with substrate; via topaquinone) is an active-site residue. Residue tyrosine 471 is modified to 2',4',5'-topaquinone. 2 residues coordinate Cu(2+): histidine 520 and histidine 522. Ca(2+)-binding residues include aspartate 529, leucine 530, aspartate 531, and glutamate 572. N-linked (GlcNAc...) asparagine glycosylation occurs at asparagine 592. Glutamate 641 is a Ca(2+) binding site. Residue asparagine 659 is glycosylated (N-linked (GlcNAc...) asparagine). Phenylalanine 663 serves as a coordination point for Ca(2+). The N-linked (GlcNAc...) asparagine glycan is linked to asparagine 666. Residues glutamate 667, aspartate 673, and leucine 674 each coordinate Ca(2+). Cu(2+) is bound at residue histidine 684. Cysteines 734 and 741 form a disulfide.

It belongs to the copper/topaquinone oxidase family. In terms of assembly, homodimer; disulfide-linked. Probably forms heterodimers with AOC2. The cofactor is Cu(2+). Ca(2+) is required as a cofactor. L-topaquinone serves as cofactor. In terms of processing, topaquinone (TPQ) is generated by copper-dependent autoxidation of a specific tyrosyl residue. Post-translationally, N- and O-glycosylated.

It is found in the cell membrane. It carries out the reaction methylamine + O2 + H2O = formaldehyde + H2O2 + NH4(+). The catalysed reaction is benzylamine + O2 + H2O = benzaldehyde + H2O2 + NH4(+). It catalyses the reaction 2-phenylethylamine + O2 + H2O = 2-phenylacetaldehyde + H2O2 + NH4(+). In terms of biological role, catalyzes the oxidative deamination of primary amines to the corresponding aldehydes with the concomitant production of hydrogen peroxide and ammonia. Has a preference for the primary monoamines methylamine and benzylamine. Could also act on 2-phenylethylamine but much less efficiently. At endothelial cells surface can also function as a cell adhesion protein that participates in lymphocyte extravasation and recirculation by mediating the binding of lymphocytes to peripheral lymph node vascular endothelial cells in an L-selectin-independent fashion. The polypeptide is Amine oxidase [copper-containing] 3 (Mus musculus (Mouse)).